Reading from the N-terminus, the 86-residue chain is U13-theraphotoxin-Cg1b (86 aa).

Residues 1 to 21 form the signal peptide; that stretch reads MKVSVLITLAVLGVMFVWASA. The propeptide occupies 22–51; it reads AELEQSGSDQKDSPAWLKSMERIFQSEERE. Disulfide bonds link C52–C66, C59–C71, and C65–C78.

It belongs to the neurotoxin 10 (Hwtx-1) family. 41 (Jztx-36) subfamily. In terms of tissue distribution, expressed by the venom gland.

Its subcellular location is the secreted. Its function is as follows. Probable ion channel inhibitor. The polypeptide is U13-theraphotoxin-Cg1b (Chilobrachys guangxiensis (Chinese earth tiger tarantula)).